A 444-amino-acid polypeptide reads, in one-letter code: Tubulin beta-8 chain (444 aa).

The short motif at 1-4 is the MREI motif element; it reads MREI. GTP-binding residues include Q11, E69, S138, G142, T143, and G144. E69 contributes to the Mg(2+) binding site. A Phosphoserine; by CDK1 modification is found at S172. N204 and N226 together coordinate GTP. The interval 423–444 is disordered; that stretch reads QQYQDATAEEEEDEEYAEEEVA. Acidic residues predominate over residues 429–444; sequence TAEEEEDEEYAEEEVA. E436 is modified (5-glutamyl polyglutamate).

This sequence belongs to the tubulin family. Dimer of alpha and beta chains. A typical microtubule is a hollow water-filled tube with an outer diameter of 25 nm and an inner diameter of 15 nM. Alpha-beta heterodimers associate head-to-tail to form protofilaments running lengthwise along the microtubule wall with the beta-tubulin subunit facing the microtubule plus end conferring a structural polarity. Microtubules usually have 13 protofilaments but different protofilament numbers can be found in some organisms and specialized cells. It depends on Mg(2+) as a cofactor. Post-translationally, some glutamate residues at the C-terminus are polyglutamylated, resulting in polyglutamate chains on the gamma-carboxyl group. Polyglutamylation plays a key role in microtubule severing by spastin (SPAST). SPAST preferentially recognizes and acts on microtubules decorated with short polyglutamate tails: severing activity by SPAST increases as the number of glutamates per tubulin rises from one to eight, but decreases beyond this glutamylation threshold. Glutamylation is also involved in cilia motility. In terms of processing, some glutamate residues at the C-terminus are monoglycylated but not polyglycylated due to the absence of functional TTLL10 in human. Monoglycylation is mainly limited to tubulin incorporated into cilia and flagella axonemes, which is required for their stability and maintenance. Flagella glycylation controls sperm motility. Both polyglutamylation and monoglycylation can coexist on the same protein on adjacent residues, and lowering glycylation levels increases polyglutamylation, and reciprocally. Phosphorylated on Ser-172 by CDK1 during the cell cycle, from metaphase to telophase, but not in interphase. This phosphorylation inhibits tubulin incorporation into microtubules. Expressed at a high level in oocytes, at different stages of development.

It localises to the cytoplasm. The protein resides in the cytoskeleton. The protein localises to the spindle. In terms of biological role, tubulin is the major constituent of microtubules, a cylinder consisting of laterally associated linear protofilaments composed of alpha- and beta-tubulin heterodimers. Microtubules grow by the addition of GTP-tubulin dimers to the microtubule end, where a stabilizing cap forms. Below the cap, tubulin dimers are in GDP-bound state, owing to GTPase activity of alpha-tubulin. TUBB8 has a key role in meiotic spindle assembly and oocyte maturation. The protein is Tubulin beta-8 chain of Homo sapiens (Human).